The chain runs to 93 residues: Small ribosomal subunit protein uS19 (93 aa).

Belongs to the universal ribosomal protein uS19 family.

Its function is as follows. Protein S19 forms a complex with S13 that binds strongly to the 16S ribosomal RNA. The polypeptide is Small ribosomal subunit protein uS19 (Campylobacter jejuni subsp. jejuni serotype O:6 (strain 81116 / NCTC 11828)).